The following is a 4307-amino-acid chain: Cytoplasmic dynein 2 heavy chain 1 (4307 aa).

The stem stretch occupies residues 1–1650 (MANGTADVRK…CVQMVDSEFQ (1650 aa)). ATP is bound at residue 145 to 152 (LGIVLRRS). Residues 1074–1103 (NTLDKSAKLIKEKKIEFDDLEVTRKKLVDD) are a coiled coil. AAA stretches follow at residues 1651–1875 (YTYE…VLRG), 1938–2161 (ELSA…KQND), 2251–2505 (ADDF…WVLG), and 2617–2863 (HYGR…ESCK). Residues 1689–1696 (GPAGTGKT), 1979–1986 (GPSGAGKS), 2291–2298 (GPEGCGKG), and 2655–2662 (GRSGVGRR) each bind ATP. The stalk stretch occupies residues 2881 to 3169 (AISSSKKKEL…AEVSKAQETI (289 aa)). Coiled coils occupy residues 2897-2982 (LQAG…KEVQ), 3109-3200 (LETE…LATL), and 3408-3442 (IQHEKPDLEEQKTKLLQQEEDKKIQLAKLEESLLE). AAA regions lie at residues 3244 to 3473 (LCTE…LIQE) and 3690 to 3905 (MALF…IIDR).

It belongs to the dynein heavy chain family. As to quaternary structure, the cytoplasmic dynein complex 2 is probably composed by a heavy chain DYNC2H1 homodimer and a number of DYNC2LI1 light intermediate chains.

It localises to the cytoplasm. Its subcellular location is the cytoskeleton. The protein localises to the cilium axoneme. It is found in the cell membrane. Functionally, may function as a motor for intraflagellar retrograde transport. Functions in cilia biogenesis. May play a role in transport between endoplasmic reticulum and Golgi or organization of the Golgi in cells. This Homo sapiens (Human) protein is Cytoplasmic dynein 2 heavy chain 1 (DYNC2H1).